The following is a 3344-amino-acid chain: Genome polyprotein (3344 aa).

Residues 408-547 (IVGNSKINYI…RSVYAKMDQY (140 aa)) form the Peptidase S30 domain. Active-site for P1 proteinase activity residues include His-456, Asp-465, and Ser-499. The Involved in interaction with stylet and aphid transmission signature appears at 598-601 (KITC). The Involved in virions binding and aphid transmission motif lies at 856-858 (PTK). Residues 882 to 1004 (MYIAKKGYCY…DSEMKHYIVG (123 aa)) enclose the Peptidase C6 domain. Residues Cys-890 and His-963 each act as for helper component proteinase activity in the active site. Residues 1473–1625 (EIAHSPEREF…TQFPTKIVTE (153 aa)) form the Helicase ATP-binding domain. 1486–1493 (GAVGSGKS) contacts ATP. The short motif at 1575-1578 (DECH) is the DECH box element. Positions 1644 to 1803 (DVTAFADNIL…GLPVMTHNVG (160 aa)) constitute a Helicase C-terminal domain. The short motif at 2134 to 2141 (KKGNKKGK) is the Nuclear localization signal element. Tyr-2156 is modified (O-(5'-phospho-RNA)-tyrosine). The Peptidase C4 domain maps to 2283–2499 (GKSLCQGMRN…LSWGALKVWE (217 aa)). Residues His-2327, Asp-2362, and Cys-2431 each act as for nuclear inclusion protein A activity in the active site. Residues 2761–2885 (WVYCDADGSQ…AIHPDHEHVL (125 aa)) form the RdRp catalytic domain. Basic and acidic residues predominate over residues 3059-3093 (KNEAVDAGLNEKLKEKEKQKEKEKEKQKEKEKDGA). Residues 3059–3116 (KNEAVDAGLNEKLKEKEKQKEKEKEKQKEKEKDGASDGNDVSTSTKTGERDRDVNVGT) form a disordered region.

This sequence belongs to the potyviridae genome polyprotein family. Interacts with host eIF4E protein (via cap-binding region); this interaction mediates the translation of the VPg-viral RNA conjugates. Part of a complex that comprises VPg, RNA, host EIF4E and EIF4G; this interaction mediates the translation of the VPg-viral RNA conjugates. Post-translationally, VPg is uridylylated by the polymerase and is covalently attached to the 5'-end of the genomic RNA. This uridylylated form acts as a nucleotide-peptide primer for the polymerase. Potyviral RNA is expressed as two polyproteins which undergo post-translational proteolytic processing. Genome polyprotein is processed by NIa-pro, P1 and HC-pro proteinases resulting in the production of at least ten individual proteins. P3N-PIPO polyprotein is cleaved by P1 and HC-pro proteinases resulting in the production of three individual proteins. The P1 proteinase and the HC-pro cleave only their respective C-termini autocatalytically. 6K1 is essential for proper proteolytic separation of P3 from CI.

It is found in the host cytoplasmic vesicle. Its subcellular location is the host nucleus. It localises to the virion. It carries out the reaction RNA(n) + a ribonucleoside 5'-triphosphate = RNA(n+1) + diphosphate. The enzyme catalyses Hydrolyzes glutaminyl bonds, and activity is further restricted by preferences for the amino acids in P6 - P1' that vary with the species of potyvirus, e.g. Glu-Xaa-Xaa-Tyr-Xaa-Gln-|-(Ser or Gly) for the enzyme from tobacco etch virus. The natural substrate is the viral polyprotein, but other proteins and oligopeptides containing the appropriate consensus sequence are also cleaved.. It catalyses the reaction Hydrolyzes a Gly-|-Gly bond at its own C-terminus, commonly in the sequence -Tyr-Xaa-Val-Gly-|-Gly, in the processing of the potyviral polyprotein.. Its function is as follows. Required for aphid transmission and also has proteolytic activity. Only cleaves a Gly-Gly dipeptide at its own C-terminus. Interacts with virions and aphid stylets. Acts as a suppressor of RNA-mediated gene silencing, also known as post-transcriptional gene silencing (PTGS), a mechanism of plant viral defense that limits the accumulation of viral RNAs. May have RNA-binding activity. Has helicase activity. It may be involved in replication. Functionally, indispensable for virus replication. In terms of biological role, mediates the cap-independent, EIF4E-dependent translation of viral genomic RNAs. Binds to the cap-binding site of host EIF4E and thus interferes with the host EIF4E-dependent mRNA export and translation. VPg-RNA directly binds EIF4E and is a template for transcription. Also forms trimeric complexes with EIF4E-EIF4G, which are templates for translation. Its function is as follows. Has RNA-binding and proteolytic activities. An RNA-dependent RNA polymerase that plays an essential role in the virus replication. Functionally, involved in aphid transmission, cell-to-cell and systemis movement, encapsidation of the viral RNA and in the regulation of viral RNA amplification. The protein is Genome polyprotein of Carica papaya (Papaya).